The following is a 227-amino-acid chain: uncharacterized protein (227 aa).

Transmembrane regions (helical) follow at residues 109-128, 173-192, and 199-221; these read MCNV…FAGI, AILL…ILLT, and ALRV…VMMG.

It localises to the cell membrane. This is an uncharacterized protein from Archaeoglobus fulgidus (strain ATCC 49558 / DSM 4304 / JCM 9628 / NBRC 100126 / VC-16).